Reading from the N-terminus, the 463-residue chain is 23S rRNA (uracil(1939)-C(5))-methyltransferase RlmD (463 aa).

The TRAM domain maps to 8–76 (RSKSATVYTF…KRFEEGELIE (69 aa)). 4 residues coordinate [4Fe-4S] cluster: cysteine 90, cysteine 96, cysteine 99, and cysteine 178. The S-adenosyl-L-methionine site is built by glutamine 288, phenylalanine 317, asparagine 322, glutamate 341, aspartate 368, and aspartate 389. Cysteine 415 acts as the Nucleophile in catalysis.

Belongs to the class I-like SAM-binding methyltransferase superfamily. RNA M5U methyltransferase family. RlmD subfamily.

It carries out the reaction uridine(1939) in 23S rRNA + S-adenosyl-L-methionine = 5-methyluridine(1939) in 23S rRNA + S-adenosyl-L-homocysteine + H(+). In terms of biological role, catalyzes the formation of 5-methyl-uridine at position 1939 (m5U1939) in 23S rRNA. The polypeptide is 23S rRNA (uracil(1939)-C(5))-methyltransferase RlmD (Acinetobacter baylyi (strain ATCC 33305 / BD413 / ADP1)).